Consider the following 118-residue polypeptide: Small ribosomal subunit protein uS13 (118 aa).

The interval 99–118 is disordered; that stretch reads GQRTRTNARTRKGPRKAIKK.

Belongs to the universal ribosomal protein uS13 family. In terms of assembly, part of the 30S ribosomal subunit. Forms a loose heterodimer with protein S19. Forms two bridges to the 50S subunit in the 70S ribosome.

Located at the top of the head of the 30S subunit, it contacts several helices of the 16S rRNA. In the 70S ribosome it contacts the 23S rRNA (bridge B1a) and protein L5 of the 50S subunit (bridge B1b), connecting the 2 subunits; these bridges are implicated in subunit movement. Contacts the tRNAs in the A and P-sites. This chain is Small ribosomal subunit protein uS13, found in Xylella fastidiosa (strain M23).